A 430-amino-acid chain; its full sequence is Trigger factor (430 aa).

The 86-residue stretch at 163 to 248 folds into the PPIase FKBP-type domain; the sequence is GNIAIIDFKG…IKDIKVKELP (86 aa).

The protein belongs to the FKBP-type PPIase family. Tig subfamily.

Its subcellular location is the cytoplasm. It carries out the reaction [protein]-peptidylproline (omega=180) = [protein]-peptidylproline (omega=0). Its function is as follows. Involved in protein export. Acts as a chaperone by maintaining the newly synthesized protein in an open conformation. Functions as a peptidyl-prolyl cis-trans isomerase. In Clostridium botulinum (strain Kyoto / Type A2), this protein is Trigger factor.